The sequence spans 152 residues: Histone H2B.9 (152 aa).

Basic and acidic residues-rich tracts occupy residues 1–16 and 34–52; these read MAPKAEKKPAAKKPAE and EKRLPAGKGEKGGAGEGKK. The disordered stretch occupies residues 1-59; sequence MAPKAEKKPAAKKPAEEEPAAEKAPAAGKKPKAEKRLPAGKGEKGGAGEGKKAGRKKGK. N6-acetyllysine occurs at positions 7 and 35. Residue Lys148 forms a Glycyl lysine isopeptide (Lys-Gly) (interchain with G-Cter in ubiquitin) linkage.

It belongs to the histone H2B family. The nucleosome is a histone octamer containing two molecules each of H2A, H2B, H3 and H4 assembled in one H3-H4 heterotetramer and two H2A-H2B heterodimers. The octamer wraps approximately 147 bp of DNA. In terms of processing, can be acetylated to form H2BK6ac and H2BK33ac. Post-translationally, monoubiquitinated by BRE1 to form H2BK143ub1 and deubiquitinated by UBP26. Required for heterochromatic histone H3 di- and trimethylation at H3K4me. May give a specific tag for epigenetic transcriptional activation.

The protein localises to the nucleus. The protein resides in the chromosome. Functionally, core component of nucleosome. Nucleosomes wrap and compact DNA into chromatin, limiting DNA accessibility to the cellular machineries which require DNA as a template. Histones thereby play a central role in transcription regulation, DNA repair, DNA replication and chromosomal stability. DNA accessibility is regulated via a complex set of post-translational modifications of histones, also called histone code, and nucleosome remodeling. This chain is Histone H2B.9 (H2B.9), found in Oryza sativa subsp. indica (Rice).